The following is a 214-amino-acid chain: Pyridoxine/pyridoxamine 5'-phosphate oxidase (214 aa).

Residues 8 to 11 (RINY) and Lys-66 each bind substrate. FMN contacts are provided by residues 61 to 66 (RIVLVK), 76 to 77 (FT), Arg-82, Lys-83, and Gln-105. Substrate contacts are provided by Tyr-123, Arg-127, and Ser-131. Residues 140–141 (QS) and Trp-184 each bind FMN. 190-192 (RLH) provides a ligand contact to substrate. Arg-194 contacts FMN.

It belongs to the pyridoxamine 5'-phosphate oxidase family. In terms of assembly, homodimer. The cofactor is FMN.

It catalyses the reaction pyridoxamine 5'-phosphate + O2 + H2O = pyridoxal 5'-phosphate + H2O2 + NH4(+). The catalysed reaction is pyridoxine 5'-phosphate + O2 = pyridoxal 5'-phosphate + H2O2. The protein operates within cofactor metabolism; pyridoxal 5'-phosphate salvage; pyridoxal 5'-phosphate from pyridoxamine 5'-phosphate: step 1/1. Its pathway is cofactor metabolism; pyridoxal 5'-phosphate salvage; pyridoxal 5'-phosphate from pyridoxine 5'-phosphate: step 1/1. Functionally, catalyzes the oxidation of either pyridoxine 5'-phosphate (PNP) or pyridoxamine 5'-phosphate (PMP) into pyridoxal 5'-phosphate (PLP). The polypeptide is Pyridoxine/pyridoxamine 5'-phosphate oxidase (Burkholderia multivorans (strain ATCC 17616 / 249)).